Reading from the N-terminus, the 67-residue chain is Probable Sec-independent protein translocase protein TatE (67 aa).

Residues 1–21 traverse the membrane as a helical segment; sequence MGEISITKLLVVAALVVLLFG. A disordered region spans residues 45–67; that stretch reads DEDAGAKKDANGDLPAEKLTHKE.

It belongs to the TatA/E family. TatE subfamily.

It is found in the cell inner membrane. Its function is as follows. Part of the twin-arginine translocation (Tat) system that transports large folded proteins containing a characteristic twin-arginine motif in their signal peptide across membranes. TatE shares overlapping functions with TatA. The polypeptide is Probable Sec-independent protein translocase protein TatE (Escherichia fergusonii (strain ATCC 35469 / DSM 13698 / CCUG 18766 / IAM 14443 / JCM 21226 / LMG 7866 / NBRC 102419 / NCTC 12128 / CDC 0568-73)).